The chain runs to 159 residues: Cytochrome c-type biogenesis protein CcmE (159 aa).

Residues 1–8 lie on the Cytoplasmic side of the membrane; it reads MNPRRKKR. A helical; Signal-anchor for type II membrane protein membrane pass occupies residues 9-29; the sequence is LLVIVAVLFGIGASIGLVLYA. The Periplasmic portion of the chain corresponds to 30–159; sequence LQENINLFYT…KPKYNLDSGN (130 aa). Residues histidine 130 and tyrosine 134 each coordinate heme.

The protein belongs to the CcmE/CycJ family.

It localises to the cell inner membrane. Its function is as follows. Heme chaperone required for the biogenesis of c-type cytochromes. Transiently binds heme delivered by CcmC and transfers the heme to apo-cytochromes in a process facilitated by CcmF and CcmH. This Pseudoalteromonas translucida (strain TAC 125) protein is Cytochrome c-type biogenesis protein CcmE.